The primary structure comprises 217 residues: Large ribosomal subunit protein uL3 (217 aa).

The disordered stretch occupies residues 137 to 160; that stretch reads VSASHGSHRNHRKPGSIGASSTPS.

Belongs to the universal ribosomal protein uL3 family. In terms of assembly, part of the 50S ribosomal subunit. Forms a cluster with proteins L14 and L19.

Its function is as follows. One of the primary rRNA binding proteins, it binds directly near the 3'-end of the 23S rRNA, where it nucleates assembly of the 50S subunit. In Clavibacter michiganensis subsp. michiganensis (strain NCPPB 382), this protein is Large ribosomal subunit protein uL3.